Here is a 475-residue protein sequence, read N- to C-terminus: Aspartyl/glutamyl-tRNA(Asn/Gln) amidotransferase subunit B (475 aa).

Belongs to the GatB/GatE family. GatB subfamily. As to quaternary structure, heterotrimer of A, B and C subunits.

It carries out the reaction L-glutamyl-tRNA(Gln) + L-glutamine + ATP + H2O = L-glutaminyl-tRNA(Gln) + L-glutamate + ADP + phosphate + H(+). The enzyme catalyses L-aspartyl-tRNA(Asn) + L-glutamine + ATP + H2O = L-asparaginyl-tRNA(Asn) + L-glutamate + ADP + phosphate + 2 H(+). Functionally, allows the formation of correctly charged Asn-tRNA(Asn) or Gln-tRNA(Gln) through the transamidation of misacylated Asp-tRNA(Asn) or Glu-tRNA(Gln) in organisms which lack either or both of asparaginyl-tRNA or glutaminyl-tRNA synthetases. The reaction takes place in the presence of glutamine and ATP through an activated phospho-Asp-tRNA(Asn) or phospho-Glu-tRNA(Gln). The chain is Aspartyl/glutamyl-tRNA(Asn/Gln) amidotransferase subunit B from Staphylococcus aureus (strain MRSA252).